The chain runs to 1755 residues: MESQQLSQHSPISHGSACASVTSKEVHTNQDPLDVSASKTEECEKASTKANSQQTTTPASSAVPENPHHASPQPASVPPPQNGPYPQQCMMTQNQANPSGWSFYGHPSMIPYTPYQMSPMYFPPGPQSQFPQYPSSVGTPLSTPSPESGNTFTDSSSADSDMTSTKKYVRPPPMLTSPNDFPNWVKTYIKFLQNSNLGGIIPTVNGKPVRQITDDELTFLYNTFQIFAPSQFLPTWVKDILSVDYTDIMKILSKSIEKMQSDTQEANDIVTLANLQYNGSTPADAFETKVTNIIDRLNNNGIHINNKVACQLIMRGLSGEYKFLRYTRHRHLNMTVAELFLDIHAIYEEQQGSRNSKPNYRRNLSDEKNDSRSYTNTTKPKVIARNPQKTNNSKSKTARAHNVSTSNNSPSTDNDSISKSTTEPIQLNNKHDLHLGQELTESTVNHTNHSDDELPGHLLLDSGASRTLIRSAHHIHSASSNPDINVVDAQKRNIPINAIGDLQFHFQDNTKTSIKVLHTPNIAYDLLSLNELAAVDITACFTKNVLERSDGTVLAPIVQYGDFYWVSKRYLLPSNISVPTINNVHTSESTRKYPYPFIHRMLAHANAQTIRYSLKNNTITYFNESDVDWSSAIDYQCPDCLIGKSTKHRHIKGSRLKYQNSYEPFQYLHTDIFGPVHNLPNSAPSYFISFTDETTKFRWVYPLHDRREDSILDVFTTILAFIKNQFQASVLVIQMDRGSEYTNRTLHKFLEKNGITPCYTTTADSRAHGVAERLNRTLLDDCRTQLQCSGLPNYLWFSAIEFSTIVRNSLASPKSKKSARQHAGLAGLDISTLLPFGQPVIVNDHNPNSKIHPRGIPGYALHPSRNSYGYIIYLPSLKKTVDTTNYVILQGKESRLDQFNYDALTFDEDLNRLTASYHSFIASNEIQESNDLNIESDHDFQSDIELHPEQPRNVLSKAVSPTDSTPPSTHTEDSKRVSKTNIRAPREVDPNISESNILPSKKRSSTPQISNIESTGSGGMHKLNVPLLAPMSQSNTHESSHASKSKDFRHSDSYSENETNHTNVPISSTGGTNNKTVPQISDQETEKRIIHRSPSIDASPPENNSSHNIVPIKTPTTVSEQNTEESIIADLPLPDLPPESPTEFPDPFKELPPINSRQTNSSLGGIGDSNAYTTINSKKRSLEDNETEIKVSRDTWNTKNMRSLEPPRSKKRIHLIAAVKAVKSIKPIRTTLRYDEAITYNKDIKEKEKYIEAYHKEVNQLLKMKTWDTDEYYDRKEIDPKRVINSMFIFNKKRDGTHKARFVARGDIQHPDTYDSGMQSNTVHHYALMTSLSLALDNNYYITQLDISSAYLYADIKEELYIRPPPHLGMNDKLIRLKKSLYGLKQSGANWYETIKSYLIQQCGMEEVRGWSCVFKNSQVTICLFVDDMVLFSKNLNSNKRIIEKLKMQYDTKIINLGESDEEIQYDILGLEIKYQRGKYMKLGMENSLTEKIPKLNVPLNPKGRKLSAPGQPGLYIDQDELEIDEDEYKEKVHEMQKLIGLASYVGYKFRFDLLYYINTLAQHILFPSRQVLDMTYELIQFMWDTRDKQLIWHKNKPTKPDNKLVAISDASYGNQPYYKSQIGNIFLLNGKVIGGKSTKASLTCTSTTEAEIHAVSEAIPLLNNLSHLVQELNKKPIIKGLLTDSRSTISIIKSTNEEKFRNRFFGTKAMRLRDEVSGNNLYVYYIETKKNIADVMTKPLPIKTFKLLTNKWIH.

Polar residues-rich tracts occupy residues 1 to 23 (MESQQLSQHSPISHGSACASVTS), 48 to 60 (TKANSQQTTTPAS), and 127 to 152 (QSQFPQYPSSVGTPLSTPSPESGNTF). Disordered regions lie at residues 1–93 (MESQ…MMTQ), 126–174 (PQSQ…PPPM), and 352–421 (GSRN…SKST). The span at 153–165 (TDSSSADSDMTST) shows a compositional bias: low complexity. The tract at residues 299–401 (NNGIHINNKV…NSKSKTARAH (103 aa)) is RNA-binding. Over residues 402–418 (NVSTSNNSPSTDNDSIS) the composition is skewed to low complexity. At S416 the chain carries Phosphoserine. D461 (for protease activity; shared with dimeric partner) is an active-site residue. The tract at residues 583–640 (NVHTSESTRKYPYPFIHRMLAHANAQTIRYSLKNNTITYFNESDVDWSSAIDYQCPDC) is integrase-type zinc finger-like. The region spanning 660-835 (NSYEPFQYLH…AGLDISTLLP (176 aa)) is the Integrase catalytic domain. The Mg(2+) site is built by D671 and D736. 3 disordered regions span residues 956 to 1087 (SKAV…ETEK), 1092 to 1111 (RSPSIDASPPENNSSHNIVP), and 1130 to 1187 (DLPL…DNET). A compositionally biased stretch (low complexity) spans 960-969 (SPTDSTPPST). Over residues 1005–1015 (STPQISNIEST) the composition is skewed to polar residues. The segment covering 1038 to 1053 (ESSHASKSKDFRHSDS) has biased composition (basic and acidic residues). 2 stretches are compositionally biased toward polar residues: residues 1054-1082 (YSENETNHTNVPISSTGGTNNKTVPQISD) and 1101-1111 (PENNSSHNIVP). The Bipartite nuclear localization signal motif lies at 1178 to 1212 (KKRSLEDNETEIKVSRDTWNTKNMRSLEPPRSKKR). A Reverse transcriptase Ty1/copia-type domain is found at 1338–1476 (NNYYITQLDI…DILGLEIKYQ (139 aa)). The Mg(2+) site is built by D1346, D1427, D1428, D1610, E1652, and D1685. One can recognise an RNase H Ty1/copia-type domain in the interval 1610–1752 (DASYGNQPYY…IKTFKLLTNK (143 aa)).

The capsid protein forms a homotrimer, from which the VLPs are assembled. The protease is a homodimer, whose active site consists of two apposed aspartic acid residues. In terms of processing, initially, virus-like particles (VLPs) are composed of the structural unprocessed proteins Gag and Gag-Pol, and also contain the host initiator methionine tRNA (tRNA(i)-Met) which serves as a primer for minus-strand DNA synthesis, and a dimer of genomic Ty RNA. Processing of the polyproteins occurs within the particle and proceeds by an ordered pathway, called maturation. First, the protease (PR) is released by autocatalytic cleavage of the Gag-Pol polyprotein yielding capsid protein p45 and a Pol-p154 precursor protein. This cleavage is a prerequisite for subsequent processing of Pol-p154 at the remaining sites to release the mature structural and catalytic proteins. Maturation takes place prior to the RT reaction and is required to produce transposition-competent VLPs.

The protein localises to the cytoplasm. The protein resides in the nucleus. The enzyme catalyses DNA(n) + a 2'-deoxyribonucleoside 5'-triphosphate = DNA(n+1) + diphosphate. It catalyses the reaction Endonucleolytic cleavage to 5'-phosphomonoester.. Capsid protein (CA) is the structural component of the virus-like particle (VLP), forming the shell that encapsulates the retrotransposons dimeric RNA genome. The particles are assembled from trimer-clustered units and there are holes in the capsid shells that allow for the diffusion of macromolecules. CA also has nucleocapsid-like chaperone activity, promoting primer tRNA(i)-Met annealing to the multipartite primer-binding site (PBS), dimerization of Ty1 RNA and initiation of reverse transcription. Its function is as follows. The aspartyl protease (PR) mediates the proteolytic cleavages of the Gag and Gag-Pol polyproteins after assembly of the VLP. In terms of biological role, reverse transcriptase/ribonuclease H (RT) is a multifunctional enzyme that catalyzes the conversion of the retro-elements RNA genome into dsDNA within the VLP. The enzyme displays a DNA polymerase activity that can copy either DNA or RNA templates, and a ribonuclease H (RNase H) activity that cleaves the RNA strand of RNA-DNA heteroduplexes during plus-strand synthesis and hydrolyzes RNA primers. The conversion leads to a linear dsDNA copy of the retrotransposon that includes long terminal repeats (LTRs) at both ends. Functionally, integrase (IN) targets the VLP to the nucleus, where a subparticle preintegration complex (PIC) containing at least integrase and the newly synthesized dsDNA copy of the retrotransposon must transit the nuclear membrane. Once in the nucleus, integrase performs the integration of the dsDNA into the host genome. This chain is Transposon Ty1-DR6 Gag-Pol polyprotein (TY1B-DR6), found in Saccharomyces cerevisiae (strain ATCC 204508 / S288c) (Baker's yeast).